The sequence spans 47 residues: Accessory gland peptide Acp33A (47 aa).

The signal sequence occupies residues 1–21 (MLPSKRVPFLFTIILFLAGLG).

Main cells of accessory gland and seminal fluid.

It is found in the secreted. Responsible for physiological and behavioral changes in mated female flies. The chain is Accessory gland peptide Acp33A (Acp33A) from Drosophila melanogaster (Fruit fly).